The following is a 313-amino-acid chain: Ribosomal RNA small subunit methyltransferase H (313 aa).

Residues 31 to 33, aspartate 51, phenylalanine 77, aspartate 95, and glutamine 102 each bind S-adenosyl-L-methionine; that span reads GGH.

It belongs to the methyltransferase superfamily. RsmH family.

It localises to the cytoplasm. The enzyme catalyses cytidine(1402) in 16S rRNA + S-adenosyl-L-methionine = N(4)-methylcytidine(1402) in 16S rRNA + S-adenosyl-L-homocysteine + H(+). Its function is as follows. Specifically methylates the N4 position of cytidine in position 1402 (C1402) of 16S rRNA. This chain is Ribosomal RNA small subunit methyltransferase H, found in Xylella fastidiosa (strain M23).